Reading from the N-terminus, the 355-residue chain is NADH-quinone oxidoreductase subunit H (355 aa).

8 consecutive transmembrane segments (helical) span residues 25–45 (VVRI…LILW), 91–111 (WLYL…WAVI), 126–146 (LLYA…AGWA), 170–190 (MGFA…SEIV), 205–225 (FLSW…ISGI), 253–273 (MAFA…SALA), 290–310 (FIPG…VFIW), and 330–350 (VFLP…MSPL).

Belongs to the complex I subunit 1 family. In terms of assembly, NDH-1 is composed of 14 different subunits. Subunits NuoA, H, J, K, L, M, N constitute the membrane sector of the complex.

It localises to the cell inner membrane. The enzyme catalyses a quinone + NADH + 5 H(+)(in) = a quinol + NAD(+) + 4 H(+)(out). In terms of biological role, NDH-1 shuttles electrons from NADH, via FMN and iron-sulfur (Fe-S) centers, to quinones in the respiratory chain. The immediate electron acceptor for the enzyme in this species is believed to be ubiquinone. Couples the redox reaction to proton translocation (for every two electrons transferred, four hydrogen ions are translocated across the cytoplasmic membrane), and thus conserves the redox energy in a proton gradient. This subunit may bind ubiquinone. In Burkholderia cenocepacia (strain ATCC BAA-245 / DSM 16553 / LMG 16656 / NCTC 13227 / J2315 / CF5610) (Burkholderia cepacia (strain J2315)), this protein is NADH-quinone oxidoreductase subunit H.